Consider the following 1164-residue polypeptide: MKKNTVSEMDQRLGYKFLVPDPKAGVFYRPLHFQYVSYSNFILHRLHEILTVKRPLLSFKNNTERIMIEISNVKVTPPDYSPIIASIKGKSYDALATFTVNIFKEVMTKEGISITKISSYEGKDSHLIKIPLLIGYGNKNPLDTAKYLVPNVIGGVFINKQSVEKVGINLVEKITTWPKFRVVKPNSFTFSFSSVSPPNVLPTRYRHYKISLDISQLEASNISSTKTFITVNIVLLSQYLSRVSLEFIRRSLSYDMPPEVVYLVNAIIDSAKRLTESITDFDIDTYINDLVEAEHIKQKSQLTINEFKYEMLHNFLPHMNYTPDQLKGFYMISLLRKFLYCIYHTSRYPDRDSMVCHRILTYGKYFETLAHDELENYIGNIRNDIMNNHKNRGTYAVNIHVLTTPGLNHAFSSLLSGKFKKSDGSYRTHPHYSWMQNISIPRSVGFYPDQVKISKMFSVRKYHPSQYLYFCSSDVPERGPQVGLVSQLSVLSSITNILTSEYLDLEKKICEYIRSYYKDDISYFETGFPITIENALVASLNPNMICDFVTDFRRRKRMGFFGNLEVGITLVRDHMNEIRINIGAGRLVRPFLVVDNGELMTDVCPELESRLDDMTFSDIQKEFPHVIEMVDIDQFTFSNVCESVQKFRMMSKDERKQYDLCDFPAEFRDGYVASSLVGINHNSGPRAILGCAQAKQAISCLSSDIRNKIDNGIHLMYPERPIVISKALETSKIAANCFGQHVTIALMSYKGINQEDGIIIKKQFIQRGGLDIVTAKKHQVEIPLENFNNKERDRSNAYSKLESNGLVRLNAFLESGDAMARNISSRTLEDDFARDNQISFDVSEKYTDMYKSRVERVQVELTDKVKVRVLTMKERRPILGDKFTTRTSQKGTVAYIADETELPYDENGITPDVIINSTSIFSRKTISMLIEVILTAAYSTKPYNNKGENRPVCFPSSNETSIDAYMQFAKQCYEYSNPKLSEEELSDKIFCEKILYDPETDKPYESKVFFGPIYYLRLRHLTQDKATVRCRGKKTKLIRQANEGRKRGGGIKFGEMERDCLIAHGAANTITEVLKDSEEDYQDVYICENCGDIAAQIKSINTCLRCSKLNLSPLLTKIDTTHVSKVFLTQMNARGVKVKLDFERRPPSFYKPLDKVDLKPSFLV.

It belongs to the RNA polymerase beta chain family. As to quaternary structure, the DNA-dependent RNA polymerase used for intermediate and late genes expression consists of eight subunits (147) kDa, (133) kDa, (35) kDa, (30) kDa, (22) kDa, (19) kDa, (18) kDa and (7) kDa totalling more than 500 kDa in mass. The same holoenzyme, with the addition of the transcription-specificity factor RAP94, is used for early gene expression.

The protein localises to the virion. The enzyme catalyses RNA(n) + a ribonucleoside 5'-triphosphate = RNA(n+1) + diphosphate. Part of the DNA-dependent RNA polymerase which catalyzes the transcription of viral DNA into RNA using the four ribonucleoside triphosphates as substrates. Responsible for the transcription of early, intermediate and late genes. DNA-dependent RNA polymerase associates with the early transcription factor (ETF), itself composed of D6 and A7, thereby allowing the early genes transcription. Late transcription, and probably also intermediate transcription, require newly synthesized RNA polymerase. In Monkeypox virus (strain Zaire-96-I-16) (MPX), this protein is DNA-directed RNA polymerase 132 kDa polypeptide (RPO132).